The primary structure comprises 266 residues: Translation initiation factor 2 subunit alpha (266 aa).

The S1 motif domain maps to 12 to 83 (GDIVIGTVKD…RKGHIDLSLK (72 aa)).

It belongs to the eIF-2-alpha family. Heterotrimer composed of an alpha, a beta and a gamma chain.

Its function is as follows. eIF-2 functions in the early steps of protein synthesis by forming a ternary complex with GTP and initiator tRNA. This chain is Translation initiation factor 2 subunit alpha (eif2a), found in Methanocaldococcus jannaschii (strain ATCC 43067 / DSM 2661 / JAL-1 / JCM 10045 / NBRC 100440) (Methanococcus jannaschii).